The following is a 39-amino-acid chain: Beta-theraphotoxin-Cm2a (39 aa).

3 cysteine pairs are disulfide-bonded: Cys-7-Cys-21, Cys-14-Cys-26, and Cys-20-Cys-33. The residue at position 39 (Phe-39) is a Phenylalanine amide.

In terms of tissue distribution, expressed by the venom gland.

The protein resides in the secreted. In terms of biological role, inhibits mammalian voltage-gated sodium channel subtypes Nav1.5/SCN5A and Nav1.8/SCN10A by shifting the voltage dependence of channel activation to more depolarized potentials and by blocking the inward component of the sodium current. In vivo, this toxin causes erect, elevated tail, initial partial ataxia, followed by recovery over approximately 1 hour after injection and the progressive development of shaking. Although paralysis subsides, the body tremors never cease and persist until the end of the experiment. The protein is Beta-theraphotoxin-Cm2a of Ceratogyrus marshalli (Straighthorned baboon tarantula).